Consider the following 500-residue polypeptide: Probable cytosol aminopeptidase (500 aa).

Mn(2+)-binding residues include Lys-264 and Asp-269. Lys-276 is an active-site residue. Residues Asp-287, Asp-346, and Glu-348 each coordinate Mn(2+). The active site involves Arg-350.

The protein belongs to the peptidase M17 family. Mn(2+) serves as cofactor.

It is found in the cytoplasm. The enzyme catalyses Release of an N-terminal amino acid, Xaa-|-Yaa-, in which Xaa is preferably Leu, but may be other amino acids including Pro although not Arg or Lys, and Yaa may be Pro. Amino acid amides and methyl esters are also readily hydrolyzed, but rates on arylamides are exceedingly low.. The catalysed reaction is Release of an N-terminal amino acid, preferentially leucine, but not glutamic or aspartic acids.. In terms of biological role, presumably involved in the processing and regular turnover of intracellular proteins. Catalyzes the removal of unsubstituted N-terminal amino acids from various peptides. In Nitrobacter winogradskyi (strain ATCC 25391 / DSM 10237 / CIP 104748 / NCIMB 11846 / Nb-255), this protein is Probable cytosol aminopeptidase.